Reading from the N-terminus, the 180-residue chain is Ribulose bisphosphate carboxylase small subunit, chloroplastic 2 (180 aa).

The N-terminal 54 residues, 1-54 (MASMMSNAAVVGRTTPAQASMVAPFTGLKSVSAFPVTKKSNDITSIASNGGRVQ), are a transit peptide targeting the chloroplast.

This sequence belongs to the RuBisCO small chain family. As to quaternary structure, heterohexadecamer of 8 large and 8 small subunits.

The protein resides in the plastid. The protein localises to the chloroplast. RuBisCO catalyzes two reactions: the carboxylation of D-ribulose 1,5-bisphosphate, the primary event in carbon dioxide fixation, as well as the oxidative fragmentation of the pentose substrate. Both reactions occur simultaneously and in competition at the same active site. Although the small subunit is not catalytic it is essential for maximal activity. This chain is Ribulose bisphosphate carboxylase small subunit, chloroplastic 2, found in Mesembryanthemum crystallinum (Common ice plant).